The following is a 232-amino-acid chain: Ethylene-responsive transcription factor ERF025 (232 aa).

A compositionally biased stretch (polar residues) spans 1–29 (MSNNNNSPTTVNQETTTSREVSITLPTDQ). The interval 1–63 (MSNNNNSPTT…TATGLSGKHS (63 aa)) is disordered. Positions 30–50 (SPQTSPGSSSSPSPRPSGGSP) are enriched in low complexity. The AP2/ERF DNA-binding region spans 64 to 120 (IFRGIRLRNGKWVSEIREPRKTTRIWLGTYPVPEMAAAAYDVAALALKGPDAVLNFP). Positions 213–232 (PTMEDDSPENHEGDNLWSYK) are disordered.

It belongs to the AP2/ERF transcription factor family. ERF subfamily.

It localises to the nucleus. In terms of biological role, probably acts as a transcriptional activator. Binds to the GCC-box pathogenesis-related promoter element. May be involved in the regulation of gene expression by stress factors and by components of stress signal transduction pathways. This Arabidopsis thaliana (Mouse-ear cress) protein is Ethylene-responsive transcription factor ERF025 (ERF025).